A 457-amino-acid chain; its full sequence is tRNA modification GTPase MnmE (457 aa).

Residues arginine 23, glutamate 86, and arginine 125 each coordinate (6S)-5-formyl-5,6,7,8-tetrahydrofolate. A TrmE-type G domain is found at 221–377 (GVSVLIAGKP…LREAVFETFI (157 aa)). Asparagine 231 is a K(+) binding site. GTP-binding positions include 231–236 (NVGKSS), 250–256 (TSVPGTT), and 275–278 (DTAG). Serine 235 is a Mg(2+) binding site. Threonine 250, valine 252, and threonine 255 together coordinate K(+). Threonine 256 contacts Mg(2+). A (6S)-5-formyl-5,6,7,8-tetrahydrofolate-binding site is contributed by lysine 457.

The protein belongs to the TRAFAC class TrmE-Era-EngA-EngB-Septin-like GTPase superfamily. TrmE GTPase family. As to quaternary structure, homodimer. Heterotetramer of two MnmE and two MnmG subunits. The cofactor is K(+).

It localises to the cytoplasm. Functionally, exhibits a very high intrinsic GTPase hydrolysis rate. Involved in the addition of a carboxymethylaminomethyl (cmnm) group at the wobble position (U34) of certain tRNAs, forming tRNA-cmnm(5)s(2)U34. The sequence is that of tRNA modification GTPase MnmE from Geobacter metallireducens (strain ATCC 53774 / DSM 7210 / GS-15).